The primary structure comprises 172 residues: MKIWSSEHVFGHPWDTVIQAAMRKYPNPMNPSVLGVDVLQRRVDGRGRLHSLRLLSTEWGLPSLVRAILGTSRTLTYIREHSVVDPVEKKMELCSTNITLTNLVSVNERLVYTPHPENPEMTVLTQEAIITVKGISLGSYLESLMANTISSNAKKGWAAIEWIIEHSESAVS.

Residues 1–172 (MKIWSSEHVF…IIEHSESAVS (172 aa)) enclose the PRELI/MSF1 domain.

It belongs to the slowmo family. Interacts with TRIAP1.

The protein resides in the mitochondrion. Its function is as follows. In vitro, the TRIAP1:PRELID3A complex mediates the transfer of phosphatidic acid (PA) between liposomes and probably functions as a PA transporter across the mitochondrion intermembrane space. Phosphatidic acid import is required for cardiolipin (CL) synthesis in the mitochondrial inner membrane. This chain is PRELI domain containing protein 3A (PRELID3A), found in Homo sapiens (Human).